We begin with the raw amino-acid sequence, 242 residues long: NAD-dependent protein deacetylase (242 aa).

Residues 1 to 242 (MQQFEEVHSI…EFVEGLSSRK (242 aa)) enclose the Deacetylase sirtuin-type domain. NAD(+)-binding residues include A23, T27, F34, R35, Q102, I104, D105, and H120. Position 34 (F34) interacts with nicotinamide. I104 and D105 together coordinate nicotinamide. The active-site Proton acceptor is H120. The Zn(2+) site is built by C128, C131, C148, and C151. Residues T187, S188, N213, and I231 each contribute to the NAD(+) site.

It belongs to the sirtuin family. Class U subfamily. Zn(2+) serves as cofactor.

The protein resides in the cytoplasm. The enzyme catalyses N(6)-acetyl-L-lysyl-[protein] + NAD(+) + H2O = 2''-O-acetyl-ADP-D-ribose + nicotinamide + L-lysyl-[protein]. Functionally, NAD-dependent protein deacetylase which modulates the activities of several enzymes which are inactive in their acetylated form. The polypeptide is NAD-dependent protein deacetylase (Bacillus cereus (strain ATCC 10987 / NRS 248)).